Here is a 64-residue protein sequence, read N- to C-terminus: MPKMKSHTGMGKRVRVTGKGKIVKQQAGLRHNLEKKPSTRTRRLTGLVEVAKPDVKRIKKLLGR.

The segment covering 1 to 22 (MPKMKSHTGMGKRVRVTGKGKI) has biased composition (basic residues). A disordered region spans residues 1–39 (MPKMKSHTGMGKRVRVTGKGKIVKQQAGLRHNLEKKPST).

This sequence belongs to the bacterial ribosomal protein bL35 family.

This Salinispora arenicola (strain CNS-205) protein is Large ribosomal subunit protein bL35.